A 527-amino-acid chain; its full sequence is V(D)J recombination-activating protein 2 (527 aa).

The segment at 357–380 (EEQTTFTNSQTSTEDPGDSTPFED) is disordered. Positions 358-370 (EQTTFTNSQTSTE) are enriched in polar residues. Positions 371 to 380 (DPGDSTPFED) are enriched in acidic residues. A PHD-type; atypical zinc finger spans residues 416-484 (WITCCPTCDV…KYYCNEHVEI (69 aa)). 8 residues coordinate Zn(2+): cysteine 419, cysteine 423, cysteine 446, histidine 452, histidine 455, cysteine 458, cysteine 478, and histidine 481.

The protein belongs to the RAG2 family. In terms of assembly, component of the RAG complex composed of core components RAG1 and RAG2, and associated component HMGB1 or HMGB2. Cells of the B- and T-lymphocyte lineages.

It localises to the nucleus. Core component of the RAG complex, a multiprotein complex that mediates the DNA cleavage phase during V(D)J recombination. V(D)J recombination assembles a diverse repertoire of immunoglobulin and T-cell receptor genes in developing B and T-lymphocytes through rearrangement of different V (variable), in some cases D (diversity), and J (joining) gene segments. DNA cleavage by the RAG complex occurs in 2 steps: a first nick is introduced in the top strand immediately upstream of the heptamer, generating a 3'-hydroxyl group that can attack the phosphodiester bond on the opposite strand in a direct transesterification reaction, thereby creating 4 DNA ends: 2 hairpin coding ends and 2 blunt, 5'-phosphorylated ends. The chromatin structure plays an essential role in the V(D)J recombination reactions and the presence of histone H3 trimethylated at 'Lys-4' (H3K4me3) stimulates both the nicking and haipinning steps. The RAG complex also plays a role in pre-B cell allelic exclusion, a process leading to expression of a single immunoglobulin heavy chain allele to enforce clonality and monospecific recognition by the B-cell antigen receptor (BCR) expressed on individual B-lymphocytes. The introduction of DNA breaks by the RAG complex on one immunoglobulin allele induces ATM-dependent repositioning of the other allele to pericentromeric heterochromatin, preventing accessibility to the RAG complex and recombination of the second allele. In the RAG complex, RAG2 is not the catalytic component but is required for all known catalytic activities mediated by RAG1. It probably acts as a sensor of chromatin state that recruits the RAG complex to H3K4me3. This Homo sapiens (Human) protein is V(D)J recombination-activating protein 2 (RAG2).